We begin with the raw amino-acid sequence, 625 residues long: uncharacterized protein (625 aa).

The segment at residues 23–51 (CLACRRKKLKCDHGRPCSNCLKRSTIQSC) is a DNA-binding region (zn(2)-C6 fungal-type). Residues 93–113 (GTKSQSDYENQQSHNLPSTPS) show a composition bias toward polar residues. The segment at 93–119 (GTKSQSDYENQQSHNLPSTPSADAETQ) is disordered.

Its subcellular location is the nucleus. The protein localises to the cytoplasm. It localises to the cytoskeleton. The protein resides in the spindle. This is an uncharacterized protein from Schizosaccharomyces pombe (strain 972 / ATCC 24843) (Fission yeast).